The following is a 150-amino-acid chain: Phosphopantetheine adenylyltransferase (150 aa).

Thr-15 is a binding site for substrate. ATP-binding positions include 15–16 (TF) and His-23. Residues Ile-80 and Arg-94 each contribute to the substrate site. Residues 95 to 97 (GIR), Glu-105, and 130 to 136 (LENISSR) contribute to the ATP site.

Belongs to the bacterial CoaD family. As to quaternary structure, homohexamer. Requires Mg(2+) as cofactor.

It localises to the cytoplasm. The enzyme catalyses (R)-4'-phosphopantetheine + ATP + H(+) = 3'-dephospho-CoA + diphosphate. It participates in cofactor biosynthesis; coenzyme A biosynthesis; CoA from (R)-pantothenate: step 4/5. Reversibly transfers an adenylyl group from ATP to 4'-phosphopantetheine, yielding dephospho-CoA (dPCoA) and pyrophosphate. The polypeptide is Phosphopantetheine adenylyltransferase (Malacoplasma penetrans (strain HF-2) (Mycoplasma penetrans)).